A 360-amino-acid chain; its full sequence is S-adenosylmethionine:tRNA ribosyltransferase-isomerase (360 aa).

The protein belongs to the QueA family. Monomer.

It localises to the cytoplasm. The enzyme catalyses 7-aminomethyl-7-carbaguanosine(34) in tRNA + S-adenosyl-L-methionine = epoxyqueuosine(34) in tRNA + adenine + L-methionine + 2 H(+). It functions in the pathway tRNA modification; tRNA-queuosine biosynthesis. In terms of biological role, transfers and isomerizes the ribose moiety from AdoMet to the 7-aminomethyl group of 7-deazaguanine (preQ1-tRNA) to give epoxyqueuosine (oQ-tRNA). The protein is S-adenosylmethionine:tRNA ribosyltransferase-isomerase of Burkholderia mallei (strain NCTC 10247).